A 326-amino-acid chain; its full sequence is Probable cell division protein WhiA (326 aa).

A DNA-binding region (H-T-H motif) is located at residues 275-308 (SLDELGRLADPPMTKDAIAGRIRRLLAMADKRAL).

It belongs to the WhiA family.

In terms of biological role, involved in cell division and chromosome segregation. The protein is Probable cell division protein WhiA of Arthrobacter sp. (strain FB24).